Consider the following 217-residue polypeptide: Large ribosomal subunit protein eL14 (217 aa).

Residue Lys79 is modified to N6-acetyllysine. Residue Lys85 is modified to N6-acetyllysine; alternate. Position 85 is an N6-succinyllysine; alternate (Lys85). Lys124 is covalently cross-linked (Glycyl lysine isopeptide (Lys-Gly) (interchain with G-Cter in SUMO2)). The residue at position 139 (Ser139) is a Phosphoserine. A disordered region spans residues 162 to 217 (KVPAKKATGPGKKAAGQKAPAQKAAGQKAAPPAKGQKGQKTPAQKAPAPKAAGKKA). A 1-1; approximate repeat occupies 173–177 (KKAAG). Residues 173–192 (KKAAGQKAPAQKAAGQKAAP) form a 4 X 5 AA tandem repeats of Q-K-A-[APS]-X region. Repeat copies occupy residues 178–182 (QKAPA), 183–187 (QKAAG), 188–192 (QKAAP), 195–197 (KGQ), and 198–200 (KGQ). Residues 195–200 (KGQKGQ) form a 2 X 3 AA tandem repeats of K-G-Q region. Position 206 is an N6-succinyllysine (Lys206).

It belongs to the eukaryotic ribosomal protein eL14 family. As to quaternary structure, component of the large ribosomal subunit.

It is found in the cytoplasm. Functionally, component of the large ribosomal subunit. The ribosome is a large ribonucleoprotein complex responsible for the synthesis of proteins in the cell. The polypeptide is Large ribosomal subunit protein eL14 (Rpl14) (Mus musculus (Mouse)).